Consider the following 279-residue polypeptide: MAAAFDPSGRLPDLFTSAGTSSFSAFLSMAAPELLPGRRPLPPGTAADLTPHATTIVAIAAAGGVVMAGDRRATMGNLIAQRDIEKVYPADAYSLVGMAGAAGIGIELIRLFQVELEHYEKIEGAMLSLDGKANRLAAMVRGNLGAAMQGLAVVPMFAGFDLAANDPVKAGRIFSFDVTGGPYEETGYDAVGSGSLFAKSALKKRFRVGLSVDDAMRLAVEALYDAADDDTATGGPDLTRRIYPVVMTVTAEGTHRLTEAETAAIAENVVAGRMENPGG.

Residues 1 to 53 constitute a propeptide, removed in mature form; by autocatalysis; the sequence is MAAAFDPSGRLPDLFTSAGTSSFSAFLSMAAPELLPGRRPLPPGTAADLTPHA. Thr54 functions as the Nucleophile in the catalytic mechanism.

Belongs to the peptidase T1B family. In terms of assembly, the 20S proteasome core is composed of 14 alpha and 14 beta subunits that assemble into four stacked heptameric rings, resulting in a barrel-shaped structure. The two inner rings, each composed of seven catalytic beta subunits, are sandwiched by two outer rings, each composed of seven alpha subunits. The catalytic chamber with the active sites is on the inside of the barrel. Has a gated structure, the ends of the cylinder being occluded by the N-termini of the alpha-subunits. Is capped by the proteasome-associated ATPase, ARC.

The protein resides in the cytoplasm. It catalyses the reaction Cleavage of peptide bonds with very broad specificity.. It participates in protein degradation; proteasomal Pup-dependent pathway. Its activity is regulated as follows. The formation of the proteasomal ATPase ARC-20S proteasome complex, likely via the docking of the C-termini of ARC into the intersubunit pockets in the alpha-rings, may trigger opening of the gate for substrate entry. Interconversion between the open-gate and close-gate conformations leads to a dynamic regulation of the 20S proteasome proteolysis activity. Functionally, component of the proteasome core, a large protease complex with broad specificity involved in protein degradation. The sequence is that of Proteasome subunit beta from Salinispora arenicola (strain CNS-205).